The primary structure comprises 322 residues: Quinolinate synthase (322 aa).

Iminosuccinate-binding residues include His36 and Ser53. Position 98 (Cys98) interacts with [4Fe-4S] cluster. Residues 124–126 (YIN) and Ser141 contribute to the iminosuccinate site. Cys184 provides a ligand contact to [4Fe-4S] cluster. Residues 210–212 (HPE) and Thr227 each bind iminosuccinate. Residue Cys278 participates in [4Fe-4S] cluster binding.

Belongs to the quinolinate synthase family. Type 2 subfamily. Requires [4Fe-4S] cluster as cofactor.

The protein resides in the cytoplasm. The catalysed reaction is iminosuccinate + dihydroxyacetone phosphate = quinolinate + phosphate + 2 H2O + H(+). It functions in the pathway cofactor biosynthesis; NAD(+) biosynthesis; quinolinate from iminoaspartate: step 1/1. Its function is as follows. Catalyzes the condensation of iminoaspartate with dihydroxyacetone phosphate to form quinolinate. This is Quinolinate synthase from Chloroherpeton thalassium (strain ATCC 35110 / GB-78).